The primary structure comprises 259 residues: TCF3 fusion partner homolog (259 aa).

2 disordered regions span residues 51–72 (GLGD…GRRR) and 141–210 (EDDG…APVQ). Phosphoserine is present on Ser167. A Phosphothreonine modification is found at Thr172. Phosphoserine occurs at positions 180 and 188. Thr203 bears the Phosphothreonine mark. A Glycyl lysine isopeptide (Lys-Gly) (interchain with G-Cter in SUMO2) cross-link involves residue Lys222. The interval 240–259 (VSRGPDKLLPYPTLASPPFD) is disordered. Ser255 bears the Phosphoserine mark.

Interacts with NOL3; translocates NOL3 into the nucleus and negatively regulated TFPT-induced cell death. Component of the chromatin remodeling INO80 complex; specifically part of a complex module associated with the N-terminus of INO80. Ubiquitously expressed. Abundant in the brain.

It is found in the nucleus. Appears to promote apoptosis in a p53/TP53-independent manner. In terms of biological role, putative regulatory component of the chromatin remodeling INO80 complex which is involved in transcriptional regulation, DNA replication and probably DNA repair. This chain is TCF3 fusion partner homolog (Tfpt), found in Rattus norvegicus (Rat).